A 327-amino-acid polypeptide reads, in one-letter code: Putative pumilio homolog 19 (327 aa).

The 324-residue stretch at 1 to 324 folds into the PUM-HD domain; it reads MAVSDNTFSM…NIANILDTFR (324 aa). Pumilio repeat units follow at residues 79–114, 115–149, 150–185, 186–222, 223–260, and 261–295; these read SDSD…FCAA, ILRR…ALYE, RILY…DQLL, ELVV…NIAV, NLYG…ELLG, and CDGD…DLFW.

Its subcellular location is the cytoplasm. Its function is as follows. Sequence-specific RNA-binding protein that regulates translation and mRNA stability by binding the 3'-UTR of target mRNAs. The sequence is that of Putative pumilio homolog 19 (APUM19) from Arabidopsis thaliana (Mouse-ear cress).